Here is a 549-residue protein sequence, read N- to C-terminus: Cytoplasmic trehalase (549 aa).

Residues arginine 168, 175 to 176 (WD), asparagine 212, 221 to 223 (RSQ), 292 to 294 (RDE), and glycine 324 contribute to the substrate site. Residues aspartate 326 and glutamate 509 each act as proton donor/acceptor in the active site. Residue glutamate 525 participates in substrate binding.

It belongs to the glycosyl hydrolase 37 family. As to quaternary structure, monomer.

It localises to the cytoplasm. The enzyme catalyses alpha,alpha-trehalose + H2O = alpha-D-glucose + beta-D-glucose. It participates in glycan degradation; trehalose degradation; D-glucose from alpha,alpha-trehalose: step 1/1. Its function is as follows. Hydrolyzes trehalose to glucose. Could be involved, in cells returning to low osmolarity conditions, in the utilization of the accumulated cytoplasmic trehalose, which was synthesized in response to high osmolarity. This chain is Cytoplasmic trehalase, found in Escherichia coli O157:H7.